The chain runs to 1208 residues: ATP-dependent DNA helicase Q4 (1208 aa).

2 disordered regions span residues Ala-17 to Ser-180 and Phe-201 to Ala-333. At Ser-27 the chain carries Phosphoserine. The span at Glu-36 to Thr-47 shows a compositional bias: basic and acidic residues. Residues Ser-61–Glu-70 are compositionally biased toward low complexity. Positions Ala-86–Gly-100 are enriched in polar residues. Residues Ser-178 and Ser-180 each carry the phosphoserine modification. Polar residues predominate over residues Ala-273 to Gly-283. One can recognise a Helicase ATP-binding domain in the interval Val-489–Pro-662. Leu-502–Ser-509 serves as a coordination point for ATP. The DEAH box signature appears at Asp-605–His-608. The 168-residue stretch at Asp-683–Phe-850 folds into the Helicase C-terminal domain. Zn(2+)-binding residues include Cys-853 and Cys-855. Positions Pro-860 to Gln-888 are disordered. 2 residues coordinate Zn(2+): Cys-897 and His-900. Residues Glu-1111–Ala-1130 form a disordered region. Positions Gly-1117–Arg-1208 are increases helicase activity about 5-fold (in a fragment starting at residue 427).

Belongs to the helicase family. RecQ subfamily. In terms of assembly, interacts with UBR1 and UBR2. Interacts with MCM10; this interaction regulates RECQL4 unwinding activity. Interacts (via residues 1-54) with TOPBP1. It depends on Zn(2+) as a cofactor. Ubiquitously expressed, with highest levels in thymus and testis.

The protein localises to the cytoplasm. It is found in the nucleus. It catalyses the reaction Couples ATP hydrolysis with the unwinding of duplex DNA by translocating in the 3'-5' direction.. The enzyme catalyses ATP + H2O = ADP + phosphate + H(+). In terms of biological role, an ATP-dependent DNA helicase which unwinds dsDNA with a 3'-overhang in a 3'-5' direction. Does not unwind more than 18 bp of dsDNA. May modulate chromosome segregation. The N-terminal domain (residues 1-54) binds DNA Y-shaped DNA better than ss- or dsDNA. The core helicase domain binds ssDNA. The protein is ATP-dependent DNA helicase Q4 (RECQL4) of Homo sapiens (Human).